A 54-amino-acid chain; its full sequence is MDRKKDEIQRKYREQMREKKEREKEDGSSHTFEIVVVLAIIILMFFFNSVFKAF.

Residues 1-28 are compositionally biased toward basic and acidic residues; sequence MDRKKDEIQRKYREQMREKKEREKEDGS. The disordered stretch occupies residues 1–29; the sequence is MDRKKDEIQRKYREQMREKKEREKEDGSS. The chain crosses the membrane as a helical span at residues 31 to 51; that stretch reads TFEIVVVLAIIILMFFFNSVF.

The protein localises to the cell membrane. This is an uncharacterized protein from Bacillus subtilis (strain 168).